Reading from the N-terminus, the 329-residue chain is Ethylene-responsive transcription factor ERF117 (329 aa).

Disordered stretches follow at residues 25-51 (DATDSSSDDESISGNNPRRQIKPKPPK) and 71-90 (NSTGNKAAGNRKTSSGFKGV). The span at 71 to 86 (NSTGNKAAGNRKTSSG) shows a compositional bias: polar residues. The segment at residues 86-143 (GFKGVRRRPWGKFAAEIRNPFEKKRKWLGTFPTEEEAAEAYQKSKREFDERLGLVKQE) is a DNA-binding region (AP2/ERF).

Belongs to the AP2/ERF transcription factor family. ERF subfamily.

It localises to the nucleus. Its function is as follows. Probably acts as a transcriptional activator. Binds to the GCC-box pathogenesis-related promoter element. May be involved in the regulation of gene expression by stress factors and by components of stress signal transduction pathways. This chain is Ethylene-responsive transcription factor ERF117 (ERF117), found in Arabidopsis thaliana (Mouse-ear cress).